The following is a 723-amino-acid chain: Phenylalanine ammonia-lyase (723 aa).

The active-site Proton donor/acceptor is Y77. Residues 182-184 constitute a cross-link (5-imidazolinone (Ala-Gly)); that stretch reads ASG. A 2,3-didehydroalanine (Ser) modification is found at S183. (E)-cinnamate-binding residues include N241, Q336, R342, N372, K443, E471, and N474.

This sequence belongs to the PAL/histidase family. Post-translationally, contains an active site 4-methylidene-imidazol-5-one (MIO), which is formed autocatalytically by cyclization and dehydration of residues Ala-Ser-Gly.

It localises to the cytoplasm. The catalysed reaction is L-phenylalanine = (E)-cinnamate + NH4(+). Its pathway is secondary metabolite biosynthesis. It functions in the pathway phenylpropanoid metabolism; trans-cinnamate biosynthesis; trans-cinnamate from L-phenylalanine: step 1/1. In terms of biological role, phenylalanine ammonia-lyase; part of the gene cluster that mediates the biosynthesis of squalestatin S1 (SQS1, also known as zaragozic acid A), a heavily oxidized fungal polyketide that offers potent cholesterol lowering activity by targeting squalene synthase (SS). SQS1 is composed of a 2,8-dioxobicyclic[3.2.1]octane-3,4,5-tricarboxyclic acid core that is connected to two lipophilic polyketide arms. These initial steps feature the priming of an unusual benzoic acid starter unit onto the highly reducing polyketide synthase clz14, followed by oxaloacetate extension and product release to generate a tricarboxylic acid containing product. The phenylalanine ammonia lyase (PAL) clz10 and the acyl-CoA ligase clz12 are involved in transforming phenylalanine into benzoyl-CoA. The citrate synthase-like protein clz17 is involved in connecting the C-alpha-carbons of the hexaketide chain and oxaloacetate to afford the tricarboxylic acid unit. The potential hydrolytic enzymes, clz11 and clz13, are in close proximity to pks2 and may participate in product release. On the other side, the tetraketide arm is synthesized by a the squalestatin tetraketide synthase clz2 and enzymatically esterified to the core in the last biosynthetic step, by the acetyltransferase clz6. The biosynthesis of the tetraketide must involve 3 rounds of chain extension. After the first and second rounds methyl-transfer occurs, and in all rounds of extension the ketoreductase and dehydratase are active. The enoyl reductase and C-MeT of clz2 are not active in the final round of extension. The acetyltransferase clz6 appears to have a broad substrate selectivity for its acyl CoA substrate, allowing the in vitro synthesis of novel squalestatins. The biosynthesis of SQS1 requires several oxidative steps likely performed by oxidoreductases clz3, clz15 and clz16. Finally, in support of the identification of the cluster as being responsible for SQS1 production, the cluster contains a gene encoding a putative squalene synthase (SS) clz20, suggesting a likely mechanism for self-resistance. The sequence is that of Phenylalanine ammonia-lyase from Cochliobolus lunatus (Filamentous fungus).